The primary structure comprises 131 residues: Peptide methionine sulfoxide reductase MsrB (131 aa).

In terms of domain architecture, MsrB spans 8-130; that stretch reads LEEWRAMLDP…NSVCLDLVPR (123 aa). Zn(2+) contacts are provided by Cys47, Cys50, Cys96, and Cys99. The Nucleophile role is filled by Cys119.

It belongs to the MsrB Met sulfoxide reductase family. Requires Zn(2+) as cofactor.

The enzyme catalyses L-methionyl-[protein] + [thioredoxin]-disulfide + H2O = L-methionyl-(R)-S-oxide-[protein] + [thioredoxin]-dithiol. The chain is Peptide methionine sulfoxide reductase MsrB from Pseudomonas fluorescens (strain Pf0-1).